A 992-amino-acid polypeptide reads, in one-letter code: Probable translation initiation factor IF-2 (992 aa).

The 125-residue stretch at 96-220 (KNWHGVTVTP…LSLALLRFGI (125 aa)) folds into the DOD-type homing endonuclease domain. The tr-type G domain occupies 399-616 (TTETHNFIAN…LIAGLSQRYL (218 aa)). Residues 472–476 (DTPGH) and 526–529 (NKID) each bind GTP.

The protein belongs to the TRAFAC class translation factor GTPase superfamily. Classic translation factor GTPase family. IF-2 subfamily. In terms of processing, this protein undergoes a protein self splicing that involves a post-translational excision of the intervening region (intein) followed by peptide ligation.

Functionally, function in general translation initiation by promoting the binding of the formylmethionine-tRNA to ribosomes. Seems to function along with eIF-2. This chain is Probable translation initiation factor IF-2 (infB), found in Pyrococcus abyssi (strain GE5 / Orsay).